Here is a 397-residue protein sequence, read N- to C-terminus: MTTNTVTRKVAWLRVVTLAIAAFIFNTTEFVPVGLLSDIAASFHMETAQTGIMLTIYAWVVALMSLPFMLLTSQVERRRLLICLFVLFIASHILSFMAWSFTVLVISRIGVAFAHAIFWSITASLAIRLAPAGKRAQALSLLATGTALAMVLGLPVGRIVGQYFGWRTTFLAIGVGAFLTLLCLIKLLPLLPSEHSGSLKSLPVLFRRPALMSIYLLTVVVVTAHYTAYSYIEPFVQNIAGLSANFATVLLLILGGAGIIGSVIFGKLGNNHASVLVSVAIALLMACLLLLMPASVSETHLAILSIFWGIAIMMIGLGMQVKVLALAPDATDVAMSLFSGIFNIGIGAGALVGNQVSLHWSMADIGYVGAIPAFLALVWSVIIFRRWPVVLEEQPQH.

The next 12 helical transmembrane spans lie at 15-35 (VVTL…PVGL), 51-71 (GIML…FMLL), 81-101 (LICL…AWSF), 103-123 (VLVI…SITA), 136-156 (AQAL…GLPV), 170-190 (FLAI…LLPL), 209-229 (PALM…YTAY), 246-266 (FATV…VIFG), 273-293 (ASVL…LLMP), 301-321 (LAIL…GMQV), 333-353 (VAMS…ALVG), and 364-384 (DIGY…VIIF).

It belongs to the major facilitator superfamily. SotB (TC 2.A.1.2) family.

It localises to the cell inner membrane. Its function is as follows. Involved in the efflux of sugars. The physiological role may be the reduction of the intracellular concentration of toxic sugars or sugar metabolites. The sequence is that of Probable sugar efflux transporter from Escherichia fergusonii (strain ATCC 35469 / DSM 13698 / CCUG 18766 / IAM 14443 / JCM 21226 / LMG 7866 / NBRC 102419 / NCTC 12128 / CDC 0568-73).